The primary structure comprises 432 residues: Asparagine--tRNA ligase (432 aa).

The protein belongs to the class-II aminoacyl-tRNA synthetase family. As to quaternary structure, homodimer.

It localises to the cytoplasm. The enzyme catalyses tRNA(Asn) + L-asparagine + ATP = L-asparaginyl-tRNA(Asn) + AMP + diphosphate + H(+). The protein is Asparagine--tRNA ligase of Limosilactobacillus reuteri (strain DSM 20016) (Lactobacillus reuteri).